The sequence spans 158 residues: MSDTLQSLDQLGSLKVSAPDAPQHLKKVDKFNRAYATGKRKDAVARVWIKPGAGKVIVNTREVEVYFARPVLRMMIQQPLVAAARAGQYDVICTVAGGGLSGQAGAVRHGISKALTYFEPELRGVLKKGGFLTRDSRVVERKKYGKAKARRSFQFSKR.

This sequence belongs to the universal ribosomal protein uS9 family.

The polypeptide is Small ribosomal subunit protein uS9 (Rhodopseudomonas palustris (strain BisA53)).